The chain runs to 261 residues: Putative outer membrane protein CT_371 (261 aa).

The first 18 residues, 1–18 (MRLCFILFLLLSPLISEA), serve as a signal peptide directing secretion.

It is found in the cell outer membrane. The polypeptide is Putative outer membrane protein CT_371 (Chlamydia trachomatis serovar D (strain ATCC VR-885 / DSM 19411 / UW-3/Cx)).